The primary structure comprises 102 residues: Small ribosomal subunit protein uS10 (102 aa).

It belongs to the universal ribosomal protein uS10 family. In terms of assembly, part of the 30S ribosomal subunit.

Its function is as follows. Involved in the binding of tRNA to the ribosomes. This is Small ribosomal subunit protein uS10 from Streptococcus mutans serotype c (strain ATCC 700610 / UA159).